The sequence spans 243 residues: 1-(5-phosphoribosyl)-5-[(5-phosphoribosylamino)methylideneamino] imidazole-4-carboxamide isomerase (243 aa).

Catalysis depends on Asp8, which acts as the Proton acceptor. The active-site Proton donor is Asp129.

This sequence belongs to the HisA/HisF family.

It is found in the cytoplasm. The catalysed reaction is 1-(5-phospho-beta-D-ribosyl)-5-[(5-phospho-beta-D-ribosylamino)methylideneamino]imidazole-4-carboxamide = 5-[(5-phospho-1-deoxy-D-ribulos-1-ylimino)methylamino]-1-(5-phospho-beta-D-ribosyl)imidazole-4-carboxamide. It participates in amino-acid biosynthesis; L-histidine biosynthesis; L-histidine from 5-phospho-alpha-D-ribose 1-diphosphate: step 4/9. This Geobacter sp. (strain M21) protein is 1-(5-phosphoribosyl)-5-[(5-phosphoribosylamino)methylideneamino] imidazole-4-carboxamide isomerase.